The following is a 374-amino-acid chain: UDP-N-acetylglucosamine--N-acetylmuramyl-(pentapeptide) pyrophosphoryl-undecaprenol N-acetylglucosamine transferase (374 aa).

UDP-N-acetyl-alpha-D-glucosamine-binding positions include 13 to 15 (TGG), N124, R165, S193, and Q294.

The protein belongs to the glycosyltransferase 28 family. MurG subfamily.

It localises to the cell inner membrane. The catalysed reaction is di-trans,octa-cis-undecaprenyl diphospho-N-acetyl-alpha-D-muramoyl-L-alanyl-D-glutamyl-meso-2,6-diaminopimeloyl-D-alanyl-D-alanine + UDP-N-acetyl-alpha-D-glucosamine = di-trans,octa-cis-undecaprenyl diphospho-[N-acetyl-alpha-D-glucosaminyl-(1-&gt;4)]-N-acetyl-alpha-D-muramoyl-L-alanyl-D-glutamyl-meso-2,6-diaminopimeloyl-D-alanyl-D-alanine + UDP + H(+). It participates in cell wall biogenesis; peptidoglycan biosynthesis. Functionally, cell wall formation. Catalyzes the transfer of a GlcNAc subunit on undecaprenyl-pyrophosphoryl-MurNAc-pentapeptide (lipid intermediate I) to form undecaprenyl-pyrophosphoryl-MurNAc-(pentapeptide)GlcNAc (lipid intermediate II). This is UDP-N-acetylglucosamine--N-acetylmuramyl-(pentapeptide) pyrophosphoryl-undecaprenol N-acetylglucosamine transferase from Rhizobium meliloti (strain 1021) (Ensifer meliloti).